Here is a 151-residue protein sequence, read N- to C-terminus: Transcriptional regulator MraZ (151 aa).

SpoVT-AbrB domains follow at residues 5-52 (ATAV…PLMN) and 81-124 (ATEC…SDVE).

It belongs to the MraZ family. In terms of assembly, forms oligomers.

The protein resides in the cytoplasm. Its subcellular location is the nucleoid. The polypeptide is Transcriptional regulator MraZ (Haemophilus influenzae (strain PittGG)).